Here is a 454-residue protein sequence, read N- to C-terminus: tRNA-2-methylthio-N(6)-dimethylallyladenosine synthase (454 aa).

Positions 6-122 (RRYHITTFGC…LQDLLQEVLA (117 aa)) constitute an MTTase N-terminal domain. Positions 15, 51, 85, 157, 161, and 164 each coordinate [4Fe-4S] cluster. Positions 143 to 380 (RESTVTAWVN…NHLVAIKAAE (238 aa)) constitute a Radical SAM core domain. Positions 383 to 447 (QRYLGRIEEV…AFSLTGEPVK (65 aa)) constitute a TRAM domain.

It belongs to the methylthiotransferase family. MiaB subfamily. As to quaternary structure, monomer. Requires [4Fe-4S] cluster as cofactor.

It is found in the cytoplasm. It carries out the reaction N(6)-dimethylallyladenosine(37) in tRNA + (sulfur carrier)-SH + AH2 + 2 S-adenosyl-L-methionine = 2-methylsulfanyl-N(6)-dimethylallyladenosine(37) in tRNA + (sulfur carrier)-H + 5'-deoxyadenosine + L-methionine + A + S-adenosyl-L-homocysteine + 2 H(+). In terms of biological role, catalyzes the methylthiolation of N6-(dimethylallyl)adenosine (i(6)A), leading to the formation of 2-methylthio-N6-(dimethylallyl)adenosine (ms(2)i(6)A) at position 37 in tRNAs that read codons beginning with uridine. The chain is tRNA-2-methylthio-N(6)-dimethylallyladenosine synthase from Gloeothece citriformis (strain PCC 7424) (Cyanothece sp. (strain PCC 7424)).